We begin with the raw amino-acid sequence, 254 residues long: Hydroxypyruvate/pyruvate aldolase (254 aa).

Residue His-47 is the Proton acceptor of the active site. Residues Glu-151 and Asp-177 each coordinate a divalent metal cation.

The protein belongs to the HpcH/HpaI aldolase family. A divalent metal cation is required as a cofactor.

The enzyme catalyses D-glyceraldehyde + pyruvate = 2-dehydro-3-deoxy-L-galactonate. In terms of biological role, aldolase which can catalyze in vitro the aldolisation reaction between hydroxypyruvate (HPA) or pyruvate (PA) and D-glyceraldehyde (D-GA). The condensation of pyruvate and D-glyceraldehyde produces 2-dehydro-3-deoxy-L-galactonate as the major product. Has weak activity with hydroxypyruvate and D-glyceraldehyde. This Chromohalobacter salexigens (strain ATCC BAA-138 / DSM 3043 / CIP 106854 / NCIMB 13768 / 1H11) protein is Hydroxypyruvate/pyruvate aldolase.